The sequence spans 398 residues: Alpha-2,8-sialyltransferase 8F (398 aa).

At 1–3 (MRS) the chain is on the cytoplasmic side. The helical; Signal-anchor for type II membrane protein transmembrane segment at 4–24 (GGTLFALIGSLMLLLLLRMLW) threads the bilayer. Residues 25–398 (CPADAPARSR…KLQFSKCETA (374 aa)) lie on the Lumenal side of the membrane. Asparagine 66, asparagine 93, asparagine 151, and asparagine 196 each carry an N-linked (GlcNAc...) asparagine glycan. Cystine bridges form between cysteine 186/cysteine 335 and cysteine 200/cysteine 395. Substrate is bound by residues asparagine 214, 236 to 238 (NPS), and 322 to 324 (STG). The Proton donor/acceptor role is filled by histidine 370.

The protein belongs to the glycosyltransferase 29 family. Highly expressed in kidney and expressed and all tissues tested.

The protein localises to the golgi apparatus membrane. It catalyses the reaction a ganglioside GM3 + CMP-N-acetyl-beta-neuraminate = a ganglioside GD3 + CMP + H(+). The catalysed reaction is a ganglioside GM3 (d18:1(4E)) + CMP-N-acetyl-beta-neuraminate = a ganglioside GD3 (d18:1(4E)) + CMP + H(+). The enzyme catalyses a ganglioside GD1a (d18:1(4E)) + CMP-N-acetyl-beta-neuraminate = a ganglioside GT1a (d18:1(4E)) + CMP + H(+). It carries out the reaction a ganglioside GD1a + CMP-N-acetyl-beta-neuraminate = a ganglioside GT1a + CMP + H(+). It catalyses the reaction a ganglioside GM1b (d18:1(4E)) + CMP-N-acetyl-beta-neuraminate = a ganglioside GD1c (d18:1(4E)) + CMP + H(+). The catalysed reaction is a ganglioside GM1b + CMP-N-acetyl-beta-neuraminate = a ganglioside GD1c + CMP + H(+). The enzyme catalyses a ganglioside GM4 (d18:1(4E)) + CMP-N-acetyl-beta-neuraminate = an N-acetyl-alpha-neuraminosyl-(2-&gt;8)-N-acetyl-alpha-neuraminosyl-(2-&gt;3)-beta-D-galactosyl-(1&lt;-&gt;1')-N-acylsphing-4-enine + CMP + H(+). It carries out the reaction N-acetyl-alpha-neuraminosyl-(2-&gt;3)-beta-D-galactosyl-(1&lt;-&gt;1')-ceramide + CMP-N-acetyl-beta-neuraminate = N-acetyl-alpha-neuraminosyl-(2-&gt;8)-N-acetyl-alpha-neuraminosyl-(2-&gt;3)-beta-D-galactosyl-(1&lt;-&gt;1')-ceramide + CMP + H(+). It catalyses the reaction a ganglioside GT1b (d18:1(4E)) + CMP-N-acetyl-beta-neuraminate = a ganglioside GQ1b (d18:1(4E)) + CMP + H(+). The catalysed reaction is a ganglioside GT1b + CMP-N-acetyl-beta-neuraminate = a ganglioside GQ1b + CMP + H(+). It functions in the pathway protein modification; protein glycosylation. Its function is as follows. Alpha-2,8-sialyltransferase that prefers O-glycans to N-glycans or glycolipids as acceptor substrates. The minimal acceptor substrate is the NeuAc-alpha-2,3(6)-Gal sequence at the non-reducing end of their carbohydrate groups. This Mus musculus (Mouse) protein is Alpha-2,8-sialyltransferase 8F.